The sequence spans 257 residues: Transcription factor MYB3 (257 aa).

HTH myb-type domains are found at residues 9-61 (KAHM…MNYL) and 62-116 (RPDL…KRKL). 2 DNA-binding regions (H-T-H motif) span residues 37–61 (WRSLPRAAGLQRCGKSCRLRWMNYL) and 89–112 (WSLIAGRLPGRTDNEIKNYWNTHI). Residues 189–193 (LNLEL) carry the Required for interaction with CPL1 motif.

In terms of assembly, interacts with CPL1. As to expression, expressed in roots, stems, leaves, flowers and siliques.

Its subcellular location is the nucleus. This is Transcription factor MYB3 (MYB3) from Arabidopsis thaliana (Mouse-ear cress).